Consider the following 800-residue polypeptide: MASVPKRHTYGGNVVTDRDRHSLQRNNEILHPIHKNQRKHATFGPYIIGSTLGEGEFGKVKLGWTKASSSNEVPKQVAIKLIRRDTIKKDADKEIKIYREINALKHLTHPNIIYLEEVLQNSKYIGIVLEFVSGGEFYKYIQRKRRLKESSACRLFAQLISGVNYMHYKGLVHRDLKLENLLLDKHENLVITDFGFVNEFFEDNELMKTSCGSPCYAAPELVVSTKAYEARKADVWSCGVILYAMLAGYLPWDDDHENPTGDDIARLYKYITQTPLKFPEYITPIPRDLLRRILVPNPRRRINLQTIKRHVWLKPHEAFLSIQPNYWDEHLQKERPKPPNKGDVGRHSTYSSSASSYSKSRDRNSLIIESTLEQHRMSPQLATSRPASPTFSTGSKVVLNDTKNDMKESNINGERTSASCRYTRDSKGNGQTQIEQVSARHSSRGNKHTSVAGLVTIPGSPTTARTRNAPSSKLTEHVKDSSQTSFTQEEFHRIGNYHVPRSRPRPTSYYPGLSRNTADNSLADIPVNKLGSNGRLTDAKDPVPLNAIHDTNKATISNNSIMLLSEGPAAKTSPVDYHYAIGDLNHGDKPITEVIDKINKDLTHKAAENGFPRESIDPESTSTILVTKEPTNSTDEDHVESQLENVGHSSNKSDASSDKDSKKIYEKKRFSFMSLYSSLNGSRSTVESRTSKGNAPPVSSRNPSGQSNRSNIKITQQQPRNLSDRVPNPDKKINDNRIRDNAPSYAESENPGRSVRASVMVSTLREENRSELSNEGNNVEAQTSTARKVLNFFKRRSMRV.

In terms of domain architecture, Protein kinase spans 46–313 (YIIGSTLGEG…LQTIKRHVWL (268 aa)). Residues 52–60 (LGEGEFGKV) and lysine 80 contribute to the ATP site. The Proton acceptor role is filled by aspartate 175. Disordered stretches follow at residues 331 to 397 (LQKE…GSKV) and 438 to 487 (SARH…TSFT). The span at 348–358 (STYSSSASSYS) shows a compositional bias: low complexity. A phosphoserine mark is found at serine 365 and serine 388. 2 stretches are compositionally biased toward polar residues: residues 380-395 (QLAT…STGS) and 459-473 (GSPT…PSSK). Serine 521 carries the post-translational modification Phosphoserine. Disordered regions lie at residues 629 to 661 (EPTN…DKDS) and 678 to 754 (SLNG…PGRS). Polar residues predominate over residues 678 to 721 (SLNGSRSTVESRTSKGNAPPVSSRNPSGQSNRSNIKITQQQPRN). The span at 727–740 (PNPDKKINDNRIRD) shows a compositional bias: basic and acidic residues. Position 748 is a phosphoserine (serine 748).

The protein belongs to the protein kinase superfamily. Ser/Thr protein kinase family.

The catalysed reaction is L-seryl-[protein] + ATP = O-phospho-L-seryl-[protein] + ADP + H(+). The enzyme catalyses L-threonyl-[protein] + ATP = O-phospho-L-threonyl-[protein] + ADP + H(+). In terms of biological role, this protein is probably a serine/threonine protein kinase. This is Serine/threonine-protein kinase KIN4 (KIN4) from Saccharomyces cerevisiae (strain ATCC 204508 / S288c) (Baker's yeast).